A 703-amino-acid chain; its full sequence is Putative glycosyl hydrolase ecdE (703 aa).

Residues 1 to 21 (MKLNIFASAILLCTSAFPVAA) form the signal peptide. Aspartate 47 is a catalytic residue. Asparagine 104, asparagine 120, asparagine 293, asparagine 397, asparagine 443, and asparagine 641 each carry an N-linked (GlcNAc...) asparagine glycan.

Belongs to the glycosyl hydrolase 32 family.

This Aspergillus rugulosus (Emericella rugulosa) protein is Putative glycosyl hydrolase ecdE.